The following is a 597-amino-acid chain: Miltiradiene synthase KSL2, chloroplastic (597 aa).

The transit peptide at methionine 1 to methionine 51 directs the protein to the chloroplast. Mg(2+) is bound by residues aspartate 329, aspartate 333, asparagine 473, and glutamate 481. A DDXXD motif motif is present at residues aspartate 329–aspartate 333.

The protein belongs to the terpene synthase family. Mg(2+) is required as a cofactor.

The protein resides in the plastid. The protein localises to the chloroplast. The enzyme catalyses (+)-copalyl diphosphate = miltiradiene + diphosphate. It functions in the pathway secondary metabolite biosynthesis; terpenoid biosynthesis. Functionally, involved in the biosynthesis of ent-kaurene diterpenoids natural products such as oridonin, miltiradiene, eriocalyxin B and nezukol, known to exhibit antitumor, anti-inflammatory and antibacterial activities. Catalyzes the conversion of (+)-copalyl diphosphate ((+)-CPP) to miltiradiene. This Isodon japonicus (Scutellaria japonica) protein is Miltiradiene synthase KSL2, chloroplastic.